Reading from the N-terminus, the 373-residue chain is Ferroptosis suppressor protein 1 (373 aa).

Residue glycine 2 is the site of N-myristoyl glycine attachment. A helical membrane pass occupies residues 7–27; sequence VDTGAVHVVIVGGGFGGIAAA. 6-hydroxy-FAD-binding positions include 18–22, arginine 54, and valine 82; that span reads GGGFG. N6-acetyllysine is present on lysine 168. Residue aspartate 285 coordinates 6-hydroxy-FAD.

Belongs to the FAD-dependent oxidoreductase family. In terms of assembly, interacts with importin subunits KPNA2 and IPO5; this interaction likely mediates the translocation into the nucleus upon oxidative stress. It depends on 6-hydroxy-FAD as a cofactor. In terms of processing, N-myristoylation at Gly-2 mediates the recruitment to lipid droplets and plasma membrane. Acetylation at Lys-168 prevents AIFM2 ubiquitination and degradation, thereby inhibiting ferroptosis. KAT2B mediates acetylation at Lys-168, while HDAC3 removes it. Post-translationally, ubiquitinated. AIFM2 undergoes 'Lys-29'-ubiquitination and proteasomal degradation, which is inhibited by acetylation at Lys-168. Detected in most normal tissues as two transcripts of 1.8 and 4.0 kb in length, respectively. Highly expressed in liver, testis, and kidney, and expressed at lower levels in pancreas, spleen, brain and lung. Expressed in heart (at protein level).

It localises to the lipid droplet. It is found in the cell membrane. Its subcellular location is the cytoplasm. The protein resides in the mitochondrion membrane. The protein localises to the nucleus. It catalyses the reaction ubiquinone-10 + NADH + H(+) = ubiquinol-10 + NAD(+). The catalysed reaction is phylloquinone + NADH + H(+) = phylloquinol + NAD(+). The enzyme catalyses menaquinone-4 + NADH + H(+) = menaquinol-4 + NAD(+). It carries out the reaction menadione + NADH + H(+) = menadiol + NAD(+). With respect to regulation, the modification by 4-hydroxy-2-nonenal (HNE) adduction in mitochondria results in loss of the oxidoreductase activity and activation of a novel function in mitochondrial oxidative stress signaling. Functionally, a NAD(P)H-dependent oxidoreductase that acts as a key inhibitor of ferroptosis. At the plasma membrane, catalyzes reduction of coenzyme Q/ubiquinone-10 to ubiquinol-10, a lipophilic radical-trapping antioxidant that prevents lipid oxidative damage and consequently ferroptosis. Acts in parallel to GPX4 to suppress phospholipid peroxidation and ferroptosis. This anti-ferroptotic function is independent of cellular glutathione levels. Also acts as a potent radical-trapping antioxidant by mediating warfarin-resistant vitamin K reduction in the canonical vitamin K cycle: catalyzes NAD(P)H-dependent reduction of vitamin K (phylloquinone, menaquinone-4 and menadione) to hydroquinone forms. Hydroquinones act as potent radical-trapping antioxidants inhibitor of phospholipid peroxidation and ferroptosis. May play a role in mitochondrial stress signaling. Upon oxidative stress, associates with the lipid peroxidation end product 4-hydroxy-2-nonenal (HNE) forming a lipid adduct devoid of oxidoreductase activity, which then translocates from mitochondria into the nucleus triggering DNA damage and cell death. This Mus musculus (Mouse) protein is Ferroptosis suppressor protein 1.